The sequence spans 190 residues: Recombination protein RecR (190 aa).

A C4-type zinc finger spans residues 58 to 73 (CEQCGALSENELCEIC). The 87-residue stretch at 81–167 (NILCIVESPK…TFSKIAQGIP (87 aa)) folds into the Toprim domain.

Belongs to the RecR family.

Its function is as follows. May play a role in DNA repair. It seems to be involved in an RecBC-independent recombinational process of DNA repair. It may act with RecF and RecO. This is Recombination protein RecR from Campylobacter jejuni subsp. jejuni serotype O:23/36 (strain 81-176).